Consider the following 103-residue polypeptide: DNA-directed RNA polymerase subunit omega (103 aa).

The interval 52–103 is disordered; it reads EIESGNVTIHPDPEGKREAVRRRIEEEKRRKEEEEKKIKEQIAKEKEDGEKI. Positions 62-103 are enriched in basic and acidic residues; sequence PDPEGKREAVRRRIEEEKRRKEEEEKKIKEQIAKEKEDGEKI.

This sequence belongs to the RNA polymerase subunit omega family. As to quaternary structure, the RNAP catalytic core consists of 2 alpha, 1 beta, 1 beta' and 1 omega subunit. When a sigma factor is associated with the core the holoenzyme is formed, which can initiate transcription.

The catalysed reaction is RNA(n) + a ribonucleoside 5'-triphosphate = RNA(n+1) + diphosphate. Its function is as follows. Promotes RNA polymerase assembly. Latches the N- and C-terminal regions of the beta' subunit thereby facilitating its interaction with the beta and alpha subunits. This Streptococcus pneumoniae serotype 19F (strain G54) protein is DNA-directed RNA polymerase subunit omega.